A 195-amino-acid chain; its full sequence is Interferon tau-5 (195 aa).

The first 23 residues, 1–23, serve as a signal peptide directing secretion; it reads MAFVLSLLMALVLVSYGPGGSLG. Disulfide bonds link Cys-24/Cys-122 and Cys-52/Cys-162.

This sequence belongs to the alpha/beta interferon family. IFN-alphaII subfamily. In terms of tissue distribution, constitutively and exclusively expressed in the mononuclear cells of the extraembryonic trophectoderm.

The protein resides in the secreted. Paracrine hormone primarily responsible for maternal recognition of pregnancy. Interacts with endometrial receptors, probably type I interferon receptors, and blocks estrogen receptor expression, preventing the estrogen-induced increase in oxytocin receptor expression in the endometrium. This results in the suppression of the pulsatile endometrial release of the luteolytic hormone prostaglandin F2-alpha, hindering the regression of the corpus luteum (luteolysis) and therefore a return to ovarian cyclicity. This, and a possible direct effect of IFN-tau on prostaglandin synthesis, leads in turn to continued ovarian progesterone secretion, which stimulates the secretion by the endometrium of the nutrients required for the growth of the conceptus. In summary, displays particularly high antiviral and antiproliferative potency concurrently with particular weak cytotoxicity, high antiluteolytic activity and immunomodulatory properties. In contrast with other IFNs, IFN-tau is not virally inducible. In Ovis aries (Sheep), this protein is Interferon tau-5 (IFNT5).